Reading from the N-terminus, the 391-residue chain is Small ribosomal subunit protein bS1 (391 aa).

S1 motif domains follow at residues 16-90 (GDKV…LSRR), 108-173 (NEII…LSRK), 194-262 (GDVI…LSIK), and 279-348 (NDVI…LSIK).

This sequence belongs to the bacterial ribosomal protein bS1 family.

Functionally, binds mRNA; thus facilitating recognition of the initiation point. It is needed to translate mRNA with a short Shine-Dalgarno (SD) purine-rich sequence. The protein is Small ribosomal subunit protein bS1 (rpsA) of Staphylococcus aureus (strain MSSA476).